A 201-amino-acid chain; its full sequence is ATP-dependent Clp protease proteolytic subunit (201 aa).

Ser105 acts as the Nucleophile in catalysis. The active site involves His130.

Belongs to the peptidase S14 family. As to quaternary structure, fourteen ClpP subunits assemble into 2 heptameric rings which stack back to back to give a disk-like structure with a central cavity, resembling the structure of eukaryotic proteasomes.

It localises to the cytoplasm. It carries out the reaction Hydrolysis of proteins to small peptides in the presence of ATP and magnesium. alpha-casein is the usual test substrate. In the absence of ATP, only oligopeptides shorter than five residues are hydrolyzed (such as succinyl-Leu-Tyr-|-NHMec, and Leu-Tyr-Leu-|-Tyr-Trp, in which cleavage of the -Tyr-|-Leu- and -Tyr-|-Trp bonds also occurs).. In terms of biological role, cleaves peptides in various proteins in a process that requires ATP hydrolysis. Has a chymotrypsin-like activity. Plays a major role in the degradation of misfolded proteins. In Aquifex aeolicus (strain VF5), this protein is ATP-dependent Clp protease proteolytic subunit.